Consider the following 464-residue polypeptide: ATP synthase subunit beta (464 aa).

G153–T160 is a binding site for ATP.

The protein belongs to the ATPase alpha/beta chains family. In terms of assembly, F-type ATPases have 2 components, CF(1) - the catalytic core - and CF(0) - the membrane proton channel. CF(1) has five subunits: alpha(3), beta(3), gamma(1), delta(1), epsilon(1). CF(0) has three main subunits: a(1), b(2) and c(9-12). The alpha and beta chains form an alternating ring which encloses part of the gamma chain. CF(1) is attached to CF(0) by a central stalk formed by the gamma and epsilon chains, while a peripheral stalk is formed by the delta and b chains.

The protein localises to the cell membrane. It catalyses the reaction ATP + H2O + 4 H(+)(in) = ADP + phosphate + 5 H(+)(out). In terms of biological role, produces ATP from ADP in the presence of a proton gradient across the membrane. The catalytic sites are hosted primarily by the beta subunits. This is ATP synthase subunit beta from Alkaliphilus oremlandii (strain OhILAs) (Clostridium oremlandii (strain OhILAs)).